The following is a 125-amino-acid chain: Small ribosomal subunit protein uS12 (125 aa).

Asp89 carries the post-translational modification 3-methylthioaspartic acid.

Belongs to the universal ribosomal protein uS12 family. In terms of assembly, part of the 30S ribosomal subunit. Contacts proteins S8 and S17. May interact with IF1 in the 30S initiation complex.

With S4 and S5 plays an important role in translational accuracy. In terms of biological role, interacts with and stabilizes bases of the 16S rRNA that are involved in tRNA selection in the A site and with the mRNA backbone. Located at the interface of the 30S and 50S subunits, it traverses the body of the 30S subunit contacting proteins on the other side and probably holding the rRNA structure together. The combined cluster of proteins S8, S12 and S17 appears to hold together the shoulder and platform of the 30S subunit. This Cupriavidus metallidurans (strain ATCC 43123 / DSM 2839 / NBRC 102507 / CH34) (Ralstonia metallidurans) protein is Small ribosomal subunit protein uS12.